We begin with the raw amino-acid sequence, 311 residues long: uncharacterized protein (311 aa).

This is an uncharacterized protein from Sinorhizobium fredii (strain NBRC 101917 / NGR234).